The primary structure comprises 112 residues: UPF0102 protein JJD26997_0163 (112 aa).

It belongs to the UPF0102 family.

The polypeptide is UPF0102 protein JJD26997_0163 (Campylobacter jejuni subsp. doylei (strain ATCC BAA-1458 / RM4099 / 269.97)).